A 310-amino-acid polypeptide reads, in one-letter code: Phosphoribosylaminoimidazole-succinocarboxamide synthase (310 aa).

This sequence belongs to the SAICAR synthetase family.

The enzyme catalyses 5-amino-1-(5-phospho-D-ribosyl)imidazole-4-carboxylate + L-aspartate + ATP = (2S)-2-[5-amino-1-(5-phospho-beta-D-ribosyl)imidazole-4-carboxamido]succinate + ADP + phosphate + 2 H(+). The protein operates within purine metabolism; IMP biosynthesis via de novo pathway; 5-amino-1-(5-phospho-D-ribosyl)imidazole-4-carboxamide from 5-amino-1-(5-phospho-D-ribosyl)imidazole-4-carboxylate: step 1/2. In Dechloromonas aromatica (strain RCB), this protein is Phosphoribosylaminoimidazole-succinocarboxamide synthase.